A 184-amino-acid chain; its full sequence is Adenylate kinase 2 (184 aa).

10 to 15 (GSGKST) serves as a coordination point for ATP. The tract at residues 30 to 59 (STGEILREAISHLSELGRHAQPYMIKGELV) is NMP. AMP-binding positions include threonine 31, arginine 36, 57–59 (ELV), 85–88 (GYPR), and glutamine 92. The interval 126 to 132 (GRSLPDD) is LID. Arginine 127 contacts ATP. AMP is bound at residue arginine 140. Glutamine 168 contributes to the ATP binding site.

This sequence belongs to the adenylate kinase family. As to quaternary structure, monomer.

It localises to the cytoplasm. The catalysed reaction is AMP + ATP = 2 ADP. It participates in purine metabolism; AMP biosynthesis via salvage pathway; AMP from ADP: step 1/1. Functionally, catalyzes the reversible transfer of the terminal phosphate group between ATP and AMP. Plays an important role in cellular energy homeostasis and in adenine nucleotide metabolism. The protein is Adenylate kinase 2 of Nostoc sp. (strain PCC 7120 / SAG 25.82 / UTEX 2576).